The chain runs to 1119 residues: Translation initiation factor IF-2 (1119 aa).

Disordered stretches follow at residues 64 to 463 (SIKK…TSGY) and 477 to 507 (RPKKEKSDESKSQKTIKQFKKKKKETTRQRQ). Basic and acidic residues predominate over residues 70–102 (IKKDNYKQNKEDKSSLISSVEEKPFKDNPEKKP). Composition is skewed to polar residues over residues 116–153 (IISNQPKSLNKPTITNSSQSQANLTNQNLNSKTSQNLN) and 182–212 (KNTTKNVQSNESSQNILNSGGGRQISNKPDQ). The segment covering 213 to 224 (NSSKSKTKNINN) has biased composition (low complexity). 4 stretches are compositionally biased toward polar residues: residues 242–257 (NKQNNKQKTSFKQTVP), 281–297 (FNRQTNTNRPGAPSSNK), 319–328 (FNRQVNTNRS), and 375–387 (QVINNNEKQNSET). The segment covering 421–435 (GKTDWDDSAKLEALR) has biased composition (basic and acidic residues). Positions 493–507 (KQFKKKKKETTRQRQ) are enriched in basic residues. The region spanning 610-782 (KRPPVITVMG…ILLVSEVEDL (173 aa)) is the tr-type G domain. Residues 619-626 (GHVDHGKT) form a G1 region. Residue 619-626 (GHVDHGKT) participates in GTP binding. The interval 644-648 (GITQH) is G2. The G3 stretch occupies residues 669 to 672 (DTPG). Residues 669-673 (DTPGH) and 723-726 (NKID) each bind GTP. The G4 stretch occupies residues 723-726 (NKID). The G5 stretch occupies residues 759 to 761 (SAI).

Belongs to the TRAFAC class translation factor GTPase superfamily. Classic translation factor GTPase family. IF-2 subfamily.

It localises to the cytoplasm. In terms of biological role, one of the essential components for the initiation of protein synthesis. Protects formylmethionyl-tRNA from spontaneous hydrolysis and promotes its binding to the 30S ribosomal subunits. Also involved in the hydrolysis of GTP during the formation of the 70S ribosomal complex. In Prochlorococcus marinus (strain MIT 9215), this protein is Translation initiation factor IF-2.